The primary structure comprises 296 residues: NAD kinase (296 aa).

The active-site Proton acceptor is the aspartate 72. Residues 72–73 (DG), 146–147 (ND), arginine 157, arginine 174, aspartate 176, 187–192 (TAYALS), and glutamine 247 contribute to the NAD(+) site.

It belongs to the NAD kinase family. A divalent metal cation is required as a cofactor.

It localises to the cytoplasm. The catalysed reaction is NAD(+) + ATP = ADP + NADP(+) + H(+). Functionally, involved in the regulation of the intracellular balance of NAD and NADP, and is a key enzyme in the biosynthesis of NADP. Catalyzes specifically the phosphorylation on 2'-hydroxyl of the adenosine moiety of NAD to yield NADP. This is NAD kinase from Hahella chejuensis (strain KCTC 2396).